Reading from the N-terminus, the 92-residue chain is Envelope glycoprotein J (92 aa).

An N-terminal signal peptide occupies residues 1 to 21; that stretch reads MSLRAVWHLGLLGSLVGAVLA. At 22 to 49 the chain is on the extracellular side; the sequence is ATHRGPAANTTDPLTHAPVSPHPSPLGG. Asn30 carries N-linked (GlcNAc...) asparagine; by host glycosylation. The helical transmembrane segment at 50 to 70 threads the bilayer; the sequence is FAVPLVVGGLCAVVLGAACLL. Over 71 to 92 the chain is Cytoplasmic; sequence ELLRRTCRGWGRYHPYMDPVVV.

Belongs to the alphaherpesvirinae glycoprotein J family.

It localises to the host Golgi apparatus membrane. Its subcellular location is the host endoplasmic reticulum membrane. The protein resides in the host endosome membrane. Its function is as follows. Inhibits host cell apoptosis. Induces an increase in reactive oxygen species (ROS) in the host cell. The sequence is that of Envelope glycoprotein J (gJ) from Homo sapiens (Human).